Here is a 1169-residue protein sequence, read N- to C-terminus: Pesticidal crystal protein Cry8Ba (1169 aa).

A disordered region spans residues 1–26 (MSPNNQNEYEIIDATPSTSVSNDSNR). Positions 15-25 (TPSTSVSNDSN) are enriched in polar residues.

It belongs to the delta endotoxin family.

In terms of biological role, promotes colloidosmotic lysis by binding to the midgut epithelial cells of insects. Active on various scarabaeid beetles. This chain is Pesticidal crystal protein Cry8Ba (cry8Ba), found in Bacillus thuringiensis serovar kumamotoensis.